The primary structure comprises 221 residues: MSPITIALPKGRPYAATVRFLREAGLAGPELEPEEGRSLYVECPAQGTRFIIARDSDVPTYVEYGAADLGIVGKNVLMELEPQVYELLDLGYSQCRFVLAAPAGVDPRQLLSGRSRQRVATKYPRMTEAYFNSRGLQVETIFLHGSIEVAPKVGLADLIVDIVETGRTLRENNLVVVEELWTSSMRLIANRAAYRLRAERIGPMVQRLRELVSRRAVAANA.

Belongs to the ATP phosphoribosyltransferase family. Short subfamily. In terms of assembly, heteromultimer composed of HisG and HisZ subunits.

The protein resides in the cytoplasm. It carries out the reaction 1-(5-phospho-beta-D-ribosyl)-ATP + diphosphate = 5-phospho-alpha-D-ribose 1-diphosphate + ATP. It participates in amino-acid biosynthesis; L-histidine biosynthesis; L-histidine from 5-phospho-alpha-D-ribose 1-diphosphate: step 1/9. Catalyzes the condensation of ATP and 5-phosphoribose 1-diphosphate to form N'-(5'-phosphoribosyl)-ATP (PR-ATP). Has a crucial role in the pathway because the rate of histidine biosynthesis seems to be controlled primarily by regulation of HisG enzymatic activity. The sequence is that of ATP phosphoribosyltransferase from Symbiobacterium thermophilum (strain DSM 24528 / JCM 14929 / IAM 14863 / T).